The chain runs to 201 residues: MCPRPRRAVLLGLGVAMSAIAGCRETAPSTTQTSDGGPEPTGRSGDTQTDGGGETTRQATVAEGGESATRADETETSELDLREANVVDVTLQSAGGRAVEFSVTLYHDDDGEDGYADWWQVETLAGDRLGRRELLHAHSTAPFTRSETIEVPEGTTCVVVRGHDQTHGYGGQAMVVDTESGATRAVQQGPEPAEFDDGDCP.

The N-terminal stretch at 1–22 is a signal peptide; it reads MCPRPRRAVLLGLGVAMSAIAG. Cys23 bears the N-acetylcysteine mark. Cys23 carries the S-archaeol cysteine lipid modification. Disordered stretches follow at residues 25 to 78 and 182 to 201; these read ETAP…ETSE and ATRA…GDCP. Over residues 69–78 the composition is skewed to basic and acidic residues; it reads TRADETETSE.

The protein resides in the cell membrane. The sequence is that of Putative lipoprotein Hmuk_2215 from Halomicrobium mukohataei (strain ATCC 700874 / DSM 12286 / JCM 9738 / NCIMB 13541) (Haloarcula mukohataei).